Reading from the N-terminus, the 889-residue chain is Valine--tRNA ligase (889 aa).

A 'HIGH' region motif is present at residues 50–60 (PNVTGKLHLGH). The short motif at 532-536 (KMSKS) is the 'KMSKS' region element. Residue lysine 535 coordinates ATP. Positions 816-889 (LAELVDLDEE…QRLVDIKAEA (74 aa)) form a coiled coil.

The protein belongs to the class-I aminoacyl-tRNA synthetase family. ValS type 1 subfamily. In terms of assembly, monomer.

Its subcellular location is the cytoplasm. It catalyses the reaction tRNA(Val) + L-valine + ATP = L-valyl-tRNA(Val) + AMP + diphosphate. In terms of biological role, catalyzes the attachment of valine to tRNA(Val). As ValRS can inadvertently accommodate and process structurally similar amino acids such as threonine, to avoid such errors, it has a 'posttransfer' editing activity that hydrolyzes mischarged Thr-tRNA(Val) in a tRNA-dependent manner. This is Valine--tRNA ligase from Lactiplantibacillus plantarum (strain ATCC BAA-793 / NCIMB 8826 / WCFS1) (Lactobacillus plantarum).